The chain runs to 244 residues: Diablo homolog, mitochondrial (244 aa).

The transit peptide at 1 to 38 (MASLPRRLIWSFSYILRESFPIVSRRNCVSLLRASWRK) directs the protein to the mitochondrion. An IAP-binding motif is present at residues 50 to 54 (AIPVG). Positions 207–218 (DEIKRTITEDKG) are enriched in basic and acidic residues. Positions 207–244 (DEIKRTITEDKGNPPSGGSPRSSLSEEEEIPEAYLRED) are disordered. Residues 220–229 (PPSGGSPRSS) are compositionally biased toward low complexity.

It belongs to the Smac/DIABLO protein family. Homodimer.

Its subcellular location is the mitochondrion. Its function is as follows. Promotes apoptosis. Acts by opposing the inhibitory activity of inhibitor of apoptosis proteins (IAP). The chain is Diablo homolog, mitochondrial from Xenopus tropicalis (Western clawed frog).